A 331-amino-acid chain; its full sequence is Trans-O-hydroxybenzylidenepyruvate hydratase-aldolase (331 aa).

It belongs to the DapA family.

It carries out the reaction (3E)-4-(2-hydroxyphenyl)-2-oxobut-3-enoate + H2O = salicylaldehyde + pyruvate. The protein operates within aromatic compound metabolism; naphthalene degradation. Its function is as follows. Involved in the naphthalene upper catabolic pathway. Catalyzes the transformation of trans-O-hydroxybenzylidenepyruvate (THBPA) to salicylaldehyde and pyruvate. The reaction is reversible. Can also use substrate which carry trans-alpha,beta-unsaturated keto acid side chain and adjacent hydroxyl group such as trans-4-(3-hydroxy-2-thianaphthenyl)-2-oxo-but-3-enoate, trans-4-(3-hydroxy-2-benzofuranyl)-2-oxobut-3-enoate, and trans-4-(3-hydroxy-2-thienyl)-2-oxobut-3-enoate. This chain is Trans-O-hydroxybenzylidenepyruvate hydratase-aldolase (nahE), found in Pseudomonas putida (Arthrobacter siderocapsulatus).